We begin with the raw amino-acid sequence, 375 residues long: Lipid-A-disaccharide synthase (375 aa).

The protein belongs to the LpxB family.

It carries out the reaction a lipid X + a UDP-2-N,3-O-bis[(3R)-3-hydroxyacyl]-alpha-D-glucosamine = a lipid A disaccharide + UDP + H(+). Its pathway is bacterial outer membrane biogenesis; LPS lipid A biosynthesis. Functionally, condensation of UDP-2,3-diacylglucosamine and 2,3-diacylglucosamine-1-phosphate to form lipid A disaccharide, a precursor of lipid A, a phosphorylated glycolipid that anchors the lipopolysaccharide to the outer membrane of the cell. This chain is Lipid-A-disaccharide synthase, found in Pseudomonas entomophila (strain L48).